The chain runs to 592 residues: Salivary peroxidase/catechol oxidase (592 aa).

Positions 1–21 (MWMFLKLLLFVCSSWWSCAQA) are cleaved as a signal peptide. A disulfide bond links Cys24 and Cys37. N-linked (GlcNAc...) asparagine glycosylation is present at Asn25. Residue His110 is the Proton acceptor of the active site. Positions 111, 187, 189, 191, and 193 each coordinate Ca(2+). A glycan (N-linked (GlcNAc...) asparagine) is linked at Asn230. Cys235 and Cys244 are oxidised to a cystine. His353 is a heme b binding site. Residue Asn366 is glycosylated (N-linked (GlcNAc...) asparagine). 2 cysteine pairs are disulfide-bonded: Cys452-Cys509 and Cys553-Cys580.

The protein belongs to the peroxidase family. XPO subfamily. As to expression, female salivary gland.

The protein resides in the secreted. It catalyses the reaction 2 catechol + O2 = 2 1,2-benzoquinone + 2 H2O. In terms of biological role, inhibits noradrenaline-induced smooth muscle contraction in the host, probably due to the oxidation of noradrenaline, resulting in vasodilation. Exhibits peroxidase activity. This chain is Salivary peroxidase/catechol oxidase, found in Anopheles albimanus (New world malaria mosquito).